Consider the following 337-residue polypeptide: S-adenosylmethionine:tRNA ribosyltransferase-isomerase (337 aa).

Belongs to the QueA family. As to quaternary structure, monomer.

Its subcellular location is the cytoplasm. The enzyme catalyses 7-aminomethyl-7-carbaguanosine(34) in tRNA + S-adenosyl-L-methionine = epoxyqueuosine(34) in tRNA + adenine + L-methionine + 2 H(+). The protein operates within tRNA modification; tRNA-queuosine biosynthesis. In terms of biological role, transfers and isomerizes the ribose moiety from AdoMet to the 7-aminomethyl group of 7-deazaguanine (preQ1-tRNA) to give epoxyqueuosine (oQ-tRNA). The polypeptide is S-adenosylmethionine:tRNA ribosyltransferase-isomerase (Legionella pneumophila (strain Paris)).